The sequence spans 689 residues: uncharacterized protein (689 aa).

Position 566 (Ser566) interacts with substrate. Catalysis depends on Tyr579, which acts as the Proton acceptor.

It belongs to the short-chain dehydrogenases/reductases (SDR) family.

This is an uncharacterized protein from Bacillus subtilis (strain 168).